A 234-amino-acid chain; its full sequence is Probable septum site-determining protein MinC (234 aa).

Belongs to the MinC family. Interacts with MinD and FtsZ.

In terms of biological role, cell division inhibitor that blocks the formation of polar Z ring septums. Rapidly oscillates between the poles of the cell to destabilize FtsZ filaments that have formed before they mature into polar Z rings. Prevents FtsZ polymerization. The sequence is that of Probable septum site-determining protein MinC from Buchnera aphidicola subsp. Baizongia pistaciae (strain Bp).